Consider the following 315-residue polypeptide: Outer membrane protease OmpP (315 aa).

A signal peptide spans 1 to 23 (MQTKLLAIMLAAPVVFSSQEASA). Active-site residues include D103, D105, D230, and H232.

The protein belongs to the peptidase A26 family.

Its subcellular location is the cell outer membrane. Protease; also acts as a receptor for bacteriophage Ox2. The sequence is that of Outer membrane protease OmpP (ompP) from Escherichia coli (strain K12).